Consider the following 252-residue polypeptide: 2-succinyl-6-hydroxy-2,4-cyclohexadiene-1-carboxylate synthase (252 aa).

The protein belongs to the AB hydrolase superfamily. MenH family. As to quaternary structure, monomer.

The catalysed reaction is 5-enolpyruvoyl-6-hydroxy-2-succinyl-cyclohex-3-ene-1-carboxylate = (1R,6R)-6-hydroxy-2-succinyl-cyclohexa-2,4-diene-1-carboxylate + pyruvate. It participates in quinol/quinone metabolism; 1,4-dihydroxy-2-naphthoate biosynthesis; 1,4-dihydroxy-2-naphthoate from chorismate: step 3/7. The protein operates within quinol/quinone metabolism; menaquinone biosynthesis. Catalyzes a proton abstraction reaction that results in 2,5-elimination of pyruvate from 2-succinyl-5-enolpyruvyl-6-hydroxy-3-cyclohexene-1-carboxylate (SEPHCHC) and the formation of 2-succinyl-6-hydroxy-2,4-cyclohexadiene-1-carboxylate (SHCHC). The protein is 2-succinyl-6-hydroxy-2,4-cyclohexadiene-1-carboxylate synthase of Citrobacter koseri (strain ATCC BAA-895 / CDC 4225-83 / SGSC4696).